The chain runs to 349 residues: Hypoxia-inducible factor 1-alpha inhibitor (349 aa).

A compositionally biased stretch (low complexity) spans 1-14 (MAATAAEVAASGSG). The disordered stretch occupies residues 1–51 (MAATAAEVAASGSGEAREEAEAPGPAWDESQLRSYSFPTRPIPRLSQSDPR). A2 carries the post-translational modification N-acetylalanine. Residues 2–125 (AATAAEVAAS…PRSNREEIKF (124 aa)) are interaction with VHL. The 166-residue stretch at 142–307 (ERLYLQQTLN…KGAPTPKRIE (166 aa)) folds into the JmjC domain. Y145 is a binding site for 2-oxoglutarate. Residues D152 and 181 to 183 (QLT) contribute to the substrate site. A 2-oxoglutarate-binding site is contributed by T196. Fe cation is bound by residues H199 and D201. 201–203 (DEQ) serves as a coordination point for substrate. Residues N205 and K214 each contribute to the 2-oxoglutarate site. Position 238 to 239 (238 to 239 (RQ)) interacts with substrate. H279 contacts Fe cation. N294 provides a ligand contact to 2-oxoglutarate. Positions 300 and 321 each coordinate substrate.

In terms of assembly, homodimer; homodimerization is essential for catalytic activity. Interacts with VHL and HIF1A. Part of a complex with VHL, HIF1A and HDAC1 or HDAC2 or HDAC3. Interacts with NFKB1 and NFKBIA. Interacts with NOTCH1, NOTCH2 and NOTCH3 but not with NOTCH4. Interacts with ABPA3. Interacts with TNKS2. Interacts with PPP1R12A. Interacts with UBE3A. Interacts with ASB4. Interacts with ANKS3. Interacts with NECAB3; the interaction is indirect and seems to be mediated by APBA3. It depends on Fe(2+) as a cofactor.

It localises to the nucleus. Its subcellular location is the cytoplasm. The protein localises to the perinuclear region. The enzyme catalyses L-asparaginyl-[hypoxia-inducible factor alpha subunit] + 2-oxoglutarate + O2 = (3S)-3-hydroxy-L-asparaginyl-[hypoxia-inducible factor alpha subunit] + succinate + CO2. The catalysed reaction is L-histidyl-[ankyrin-repeat domain protein] + 2-oxoglutarate + O2 = (3S)-3-hydroxy-L-histidyl-[ankyrin-repeat domain protein] + succinate + CO2. It catalyses the reaction L-asparaginyl-[ankyrin-repeat domain protein] + 2-oxoglutarate + O2 = (3S)-3-hydroxy-L-asparaginyl-[ankyrin-repeat domain protein] + succinate + CO2. It carries out the reaction L-aspartyl-[ankyrin-repeat domain protein] + 2-oxoglutarate + O2 = (3S)-3-hydroxy-L-aspartyl-[ankyrin-repeat domain protein] + succinate + CO2. Functionally, hydroxylates HIF-1 alpha at 'Asn-799' in the C-terminal transactivation domain (CAD). Functions as an oxygen sensor and, under normoxic conditions, the hydroxylation prevents interaction of HIF-1 with transcriptional coactivators including Cbp/p300-interacting transactivator. Involved in transcriptional repression through interaction with HIF1A, VHL and histone deacetylases. Hydroxylates specific Asn residues within ankyrin repeat domains (ARD) of NFKB1, NFKBIA, NOTCH1, ASB4, PPP1R12A and several other ARD-containing proteins. Also hydroxylates Asp and His residues within ARDs of ANK1 and TNKS2, respectively. Negatively regulates NOTCH1 activity, accelerating myogenic differentiation. Positively regulates ASB4 activity, promoting vascular differentiation. This Mus musculus (Mouse) protein is Hypoxia-inducible factor 1-alpha inhibitor (Hif1an).